The sequence spans 273 residues: Dermonecrotic toxin LdSicTox-alphaIB3aii (273 aa).

Histidine 5 is a catalytic residue. Mg(2+)-binding residues include glutamate 25 and aspartate 27. The Nucleophile role is filled by histidine 41. 2 disulfide bridges follow: cysteine 45–cysteine 51 and cysteine 47–cysteine 190. Aspartate 85 is a Mg(2+) binding site.

This sequence belongs to the arthropod phospholipase D family. Class II subfamily. It depends on Mg(2+) as a cofactor. Expressed by the venom gland.

The protein resides in the secreted. The enzyme catalyses an N-(acyl)-sphingosylphosphocholine = an N-(acyl)-sphingosyl-1,3-cyclic phosphate + choline. The catalysed reaction is an N-(acyl)-sphingosylphosphoethanolamine = an N-(acyl)-sphingosyl-1,3-cyclic phosphate + ethanolamine. It carries out the reaction a 1-acyl-sn-glycero-3-phosphocholine = a 1-acyl-sn-glycero-2,3-cyclic phosphate + choline. It catalyses the reaction a 1-acyl-sn-glycero-3-phosphoethanolamine = a 1-acyl-sn-glycero-2,3-cyclic phosphate + ethanolamine. Functionally, dermonecrotic toxins cleave the phosphodiester linkage between the phosphate and headgroup of certain phospholipids (sphingolipid and lysolipid substrates), forming an alcohol (often choline) and a cyclic phosphate. This toxin acts on sphingomyelin (SM). It may also act on ceramide phosphoethanolamine (CPE), lysophosphatidylcholine (LPC) and lysophosphatidylethanolamine (LPE), but not on lysophosphatidylserine (LPS), and lysophosphatidylglycerol (LPG). It acts by transphosphatidylation, releasing exclusively cyclic phosphate products as second products. Induces dermonecrosis, hemolysis, increased vascular permeability, edema, inflammatory response, and platelet aggregation. The chain is Dermonecrotic toxin LdSicTox-alphaIB3aii from Loxosceles deserta (Desert recluse spider).